Here is a 340-residue protein sequence, read N- to C-terminus: Anthranilate phosphoribosyltransferase (340 aa).

5-phospho-alpha-D-ribose 1-diphosphate contacts are provided by residues glycine 80, 83–84 (GD), threonine 88, 90–93 (NIST), 108–116 (KHGNRAMSS), and serine 120. Glycine 80 contacts anthranilate. Serine 92 serves as a coordination point for Mg(2+). An anthranilate-binding site is contributed by asparagine 111. Position 166 (arginine 166) interacts with anthranilate. 2 residues coordinate Mg(2+): aspartate 225 and glutamate 226.

The protein belongs to the anthranilate phosphoribosyltransferase family. Homodimer. It depends on Mg(2+) as a cofactor.

It carries out the reaction N-(5-phospho-beta-D-ribosyl)anthranilate + diphosphate = 5-phospho-alpha-D-ribose 1-diphosphate + anthranilate. It functions in the pathway amino-acid biosynthesis; L-tryptophan biosynthesis; L-tryptophan from chorismate: step 2/5. In terms of biological role, catalyzes the transfer of the phosphoribosyl group of 5-phosphorylribose-1-pyrophosphate (PRPP) to anthranilate to yield N-(5'-phosphoribosyl)-anthranilate (PRA). This Chloroflexus aggregans (strain MD-66 / DSM 9485) protein is Anthranilate phosphoribosyltransferase.